Reading from the N-terminus, the 406-residue chain is Putative 12-oxophytodienoate reductase 12 (406 aa).

FMN-binding positions include 41 to 43 (PLT), alanine 74, and glutamine 119. Residue 188-191 (HAAN) participates in substrate binding. Residues arginine 240, glycine 317, and 338–339 (GR) each bind FMN.

Belongs to the NADH:flavin oxidoreductase/NADH oxidase family. FMN serves as cofactor.

Putative oxophytodienoate reductase that may be involved in the biosynthesis or metabolism of oxylipin signaling molecules. This Oryza sativa subsp. japonica (Rice) protein is Putative 12-oxophytodienoate reductase 12 (OPR12).